The sequence spans 313 residues: Ribosomal RNA small subunit methyltransferase H (313 aa).

S-adenosyl-L-methionine contacts are provided by residues 34–36 (GGH), aspartate 53, phenylalanine 80, aspartate 101, and glutamine 108.

This sequence belongs to the methyltransferase superfamily. RsmH family.

It localises to the cytoplasm. It catalyses the reaction cytidine(1402) in 16S rRNA + S-adenosyl-L-methionine = N(4)-methylcytidine(1402) in 16S rRNA + S-adenosyl-L-homocysteine + H(+). In terms of biological role, specifically methylates the N4 position of cytidine in position 1402 (C1402) of 16S rRNA. This Lacticaseibacillus casei (strain BL23) (Lactobacillus casei) protein is Ribosomal RNA small subunit methyltransferase H.